The chain runs to 593 residues: Arginine--tRNA ligase (593 aa).

Residues 138–148 carry the 'HIGH' region motif; the sequence is ANPTGPLHVGH.

This sequence belongs to the class-I aminoacyl-tRNA synthetase family. Monomer.

Its subcellular location is the cytoplasm. The catalysed reaction is tRNA(Arg) + L-arginine + ATP = L-arginyl-tRNA(Arg) + AMP + diphosphate. This is Arginine--tRNA ligase from Burkholderia cenocepacia (strain ATCC BAA-245 / DSM 16553 / LMG 16656 / NCTC 13227 / J2315 / CF5610) (Burkholderia cepacia (strain J2315)).